The chain runs to 99 residues: MTSALTQGLERIPDQLGYLVLSEGAVLASSGDLENDEQAASAISELVSTACGFRLHRGMNVPFKRLSVVFGEHTLLVTVSGQRVFVVKRQNRGREPIDV.

Met1 carries the N-acetylmethionine modification. At Thr2 the chain carries N-acetylthreonine; in Ragulator complex protein LAMTOR4, N-terminally processed. Residue Ser67 is modified to Phosphoserine; by PKA.

It belongs to the LAMTOR4 family. Part of the Ragulator complex composed of LAMTOR1, LAMTOR2, LAMTOR3, LAMTOR4 and LAMTOR5. LAMTOR4 and LAMTOR5 form a heterodimer that interacts, through LAMTOR1, with a LAMTOR2, LAMTOR3 heterodimer. The Ragulator complex interacts with both the mTORC1 complex and heterodimers constituted of the Rag GTPases RagA/RRAGA, RagB/RRAGB, RagC/RRAGC and RagD/RRAGD; regulated by amino acid availability. The Ragulator complex interacts with SLC38A9; the probable amino acid sensor. Component of the lysosomal folliculin complex (LFC), composed of FLCN, FNIP1 (or FNIP2), RagA/RRAGA or RagB/RRAGB GDP-bound, RagC/RRAGC or RagD/RRAGD GTP-bound, and Ragulator. In terms of processing, phosphorylation at Ser-67 by PKA inhibits Ragulator complex assembly.

It localises to the lysosome. Its function is as follows. As part of the Ragulator complex it is involved in amino acid sensing and activation of mTORC1, a signaling complex promoting cell growth in response to growth factors, energy levels, and amino acids. Activated by amino acids through a mechanism involving the lysosomal V-ATPase, the Ragulator plays a dual role for the small GTPases Rag (RagA/RRAGA, RagB/RRAGB, RagC/RRAGC and/or RagD/RRAGD): it (1) acts as a guanine nucleotide exchange factor (GEF), activating the small GTPases Rag and (2) mediates recruitment of Rag GTPases to the lysosome membrane. Activated Ragulator and Rag GTPases function as a scaffold recruiting mTORC1 to lysosomes where it is in turn activated. The chain is Ragulator complex protein LAMTOR4 from Homo sapiens (Human).